The primary structure comprises 422 residues: Serine--tRNA ligase (422 aa).

229–231 (TAE) lines the L-serine pocket. Position 260–262 (260–262 (RKE)) interacts with ATP. Glu283 serves as a coordination point for L-serine. 347 to 350 (EISS) is an ATP binding site. L-serine is bound at residue Ser383.

The protein belongs to the class-II aminoacyl-tRNA synthetase family. Type-1 seryl-tRNA synthetase subfamily. In terms of assembly, homodimer. The tRNA molecule binds across the dimer.

It is found in the cytoplasm. The enzyme catalyses tRNA(Ser) + L-serine + ATP = L-seryl-tRNA(Ser) + AMP + diphosphate + H(+). It carries out the reaction tRNA(Sec) + L-serine + ATP = L-seryl-tRNA(Sec) + AMP + diphosphate + H(+). The protein operates within aminoacyl-tRNA biosynthesis; selenocysteinyl-tRNA(Sec) biosynthesis; L-seryl-tRNA(Sec) from L-serine and tRNA(Sec): step 1/1. Its function is as follows. Catalyzes the attachment of serine to tRNA(Ser). Is also able to aminoacylate tRNA(Sec) with serine, to form the misacylated tRNA L-seryl-tRNA(Sec), which will be further converted into selenocysteinyl-tRNA(Sec). The sequence is that of Serine--tRNA ligase from Geobacter sulfurreducens (strain ATCC 51573 / DSM 12127 / PCA).